We begin with the raw amino-acid sequence, 284 residues long: Pantothenate synthetase (284 aa).

Residue methionine 30–histidine 37 participates in ATP binding. Histidine 37 acts as the Proton donor in catalysis. A (R)-pantoate-binding site is contributed by glutamine 61. Glutamine 61 lines the beta-alanine pocket. Residue glycine 149–aspartate 152 coordinates ATP. Residue glutamine 155 participates in (R)-pantoate binding. ATP is bound by residues valine 178 and leucine 186–arginine 189.

Belongs to the pantothenate synthetase family. Homodimer.

Its subcellular location is the cytoplasm. The catalysed reaction is (R)-pantoate + beta-alanine + ATP = (R)-pantothenate + AMP + diphosphate + H(+). It functions in the pathway cofactor biosynthesis; (R)-pantothenate biosynthesis; (R)-pantothenate from (R)-pantoate and beta-alanine: step 1/1. In terms of biological role, catalyzes the condensation of pantoate with beta-alanine in an ATP-dependent reaction via a pantoyl-adenylate intermediate. The chain is Pantothenate synthetase from Photorhabdus laumondii subsp. laumondii (strain DSM 15139 / CIP 105565 / TT01) (Photorhabdus luminescens subsp. laumondii).